Reading from the N-terminus, the 289-residue chain is ATP synthase gamma chain (289 aa).

It belongs to the ATPase gamma chain family. In terms of assembly, F-type ATPases have 2 components, CF(1) - the catalytic core - and CF(0) - the membrane proton channel. CF(1) has five subunits: alpha(3), beta(3), gamma(1), delta(1), epsilon(1). CF(0) has three main subunits: a, b and c.

Its subcellular location is the cell inner membrane. In terms of biological role, produces ATP from ADP in the presence of a proton gradient across the membrane. The gamma chain is believed to be important in regulating ATPase activity and the flow of protons through the CF(0) complex. This is ATP synthase gamma chain from Cereibacter sphaeroides (strain ATCC 17025 / ATH 2.4.3) (Rhodobacter sphaeroides).